The primary structure comprises 163 residues: Keratin-associated protein 11-1 (163 aa).

A run of 4 repeats spans residues 111 to 120, 121 to 130, 131 to 140, and 141 to 150. Residues 111–150 form a 4 X 10 AA approximate repeats region; that stretch reads CQPLGGISSVCQPVGGISTVCQPVGGVSTVCQPACGVSRT.

The protein belongs to the PMG family. As to expression, expressed in the upper matrix and in the entire hair cortex.

Functionally, in the hair cortex, hair keratin intermediate filaments are embedded in an interfilamentous matrix, consisting of hair keratin-associated proteins (KRTAP), which are essential for the formation of a rigid and resistant hair shaft through their extensive disulfide bond cross-linking with abundant cysteine residues of hair keratins. The matrix proteins include the high-sulfur and high-glycine-tyrosine keratins. This chain is Keratin-associated protein 11-1 (KRTAP11-1), found in Homo sapiens (Human).